We begin with the raw amino-acid sequence, 275 residues long: Putative phosphoenolpyruvate synthase regulatory protein (275 aa).

153–160 lines the ADP pocket; it reads GVSRSGKT.

Belongs to the pyruvate, phosphate/water dikinase regulatory protein family. PSRP subfamily.

The catalysed reaction is [pyruvate, water dikinase] + ADP = [pyruvate, water dikinase]-phosphate + AMP + H(+). It carries out the reaction [pyruvate, water dikinase]-phosphate + phosphate + H(+) = [pyruvate, water dikinase] + diphosphate. In terms of biological role, bifunctional serine/threonine kinase and phosphorylase involved in the regulation of the phosphoenolpyruvate synthase (PEPS) by catalyzing its phosphorylation/dephosphorylation. The protein is Putative phosphoenolpyruvate synthase regulatory protein of Nitrosomonas eutropha (strain DSM 101675 / C91 / Nm57).